We begin with the raw amino-acid sequence, 246 residues long: MAFLRSMWGVLSALGRSGAELCTGCGSRLRSPFSFVYLPRWFSSVLASCPKKPVSSYLRFSKEQLPIFKAQNPDAKTTELIRRIAQRWRELPDSKKKIYQDAYRAEWQVYKEEISRFKEQLTPSQIMSLEKEIMDKHLKRKAMTKKKELTLLGKPKRPRSAYNVYVAERFQEAKGDSPQEKLKTVKENWKNLSDSEKELYIQHAKEDETRYHNEMKSWEEQMIEVGRKDLLRRTIKKQRKYGAEEC.

The transit peptide at 1–42 (MAFLRSMWGVLSALGRSGAELCTGCGSRLRSPFSFVYLPRWF) directs the protein to the mitochondrion. The segment at residues 50 to 118 (PKKPVSSYLR…VYKEEISRFK (69 aa)) is a DNA-binding region (HMG box 1). Phosphoserine; by PKA occurs at positions 55, 56, and 61. Threonine 122 is modified (phosphothreonine). The segment at residues 155–219 (PKRPRSAYNV…RYHNEMKSWE (65 aa)) is a DNA-binding region (HMG box 2). At serine 160 the chain carries Phosphoserine; by PKA. A phosphoserine mark is found at serine 193 and serine 195.

Monomer; binds DNA as a monomer. Homodimer. Component of the mitochondrial transcription initiation complex, composed at least of TFB2M, TFAM and POLRMT. In this complex TFAM recruits POLRMT to the promoter whereas TFB2M induces structural changes in POLRMT to enable promoter opening and trapping of the DNA non-template strand. Upon metabolic stress, forms a complex composed of FOXO3, SIRT3, TFAM and POLRMT. Interacts with TFB1M and TFB2M. Interacts with CLPX; this enhances DNA-binding. Phosphorylation by PKA within the HMG box 1 impairs DNA binding and promotes degradation by the AAA+ Lon protease.

The protein resides in the mitochondrion. It is found in the mitochondrion matrix. The protein localises to the mitochondrion nucleoid. Functionally, binds to the mitochondrial light strand promoter and functions in mitochondrial transcription regulation. Component of the mitochondrial transcription initiation complex, composed at least of TFB2M, TFAM and POLRMT that is required for basal transcription of mitochondrial DNA. In this complex, TFAM recruits POLRMT to a specific promoter whereas TFB2M induces structural changes in POLRMT to enable promoter opening and trapping of the DNA non-template strand. Required for accurate and efficient promoter recognition by the mitochondrial RNA polymerase. Promotes transcription initiation from the HSP1 and the light strand promoter by binding immediately upstream of transcriptional start sites. Is able to unwind DNA. Bends the mitochondrial light strand promoter DNA into a U-turn shape via its HMG boxes. Required for maintenance of normal levels of mitochondrial DNA. May play a role in organizing and compacting mitochondrial DNA. This chain is Transcription factor A, mitochondrial, found in Homo sapiens (Human).